The primary structure comprises 326 residues: MKHFLRMLIQVCLFFYCKFLWRCLKFVMRKLTGRCELQRICYNTKPGASRTMKIETSLRDSKSKLLQTSVSVHPDAIEKTIDDIMELKKINPDINPQLGISLQACLLQIVGYRNLIADVEKLRRESYDSDNPQHEEMLLKLWKFLKPNTPLESRISKQWCEIGFQGDDPKTDFRGMGLLGLYNLQYFAERDAAAAQQVLSDSLHPKCSKFSKAEWEKKRMDKAIGYSFAIVGINITDLAYNLLVSGALKTHFYNIAPEAPTLSHFQQTFCYLMHEFHKFWIEEDPMDIMEFNRVREKFRKRIIKQLQNPDMALCPHFAASEGLINM.

Residues 133 to 306 (QHEEMLLKLW…KFRKRIIKQL (174 aa)) enclose the ELMO domain.

Its function is as follows. Acts as a GTPase-activating protein (GAP) toward guanine nucleotide exchange factors like ARL2, ARL3, ARF1 and ARF6, but not for GTPases outside the Arf family. The chain is ELMO domain-containing protein 1 (ELMOD1) from Bos taurus (Bovine).